We begin with the raw amino-acid sequence, 299 residues long: uncharacterized protein (299 aa).

This is an uncharacterized protein from Bacillus subtilis (strain 168).